A 177-amino-acid chain; its full sequence is tRNA (cytidine(56)-2'-O)-methyltransferase (177 aa).

Residues Leu-84 and 109 to 113 each bind S-adenosyl-L-methionine; that span reads GAEKV.

It belongs to the aTrm56 family. Homodimer.

It localises to the cytoplasm. The catalysed reaction is cytidine(56) in tRNA + S-adenosyl-L-methionine = 2'-O-methylcytidine(56) in tRNA + S-adenosyl-L-homocysteine + H(+). Its function is as follows. Specifically catalyzes the AdoMet-dependent 2'-O-ribose methylation of cytidine at position 56 in tRNAs. The chain is tRNA (cytidine(56)-2'-O)-methyltransferase from Methanosarcina mazei (strain ATCC BAA-159 / DSM 3647 / Goe1 / Go1 / JCM 11833 / OCM 88) (Methanosarcina frisia).